The primary structure comprises 292 residues: 4-hydroxybenzoate octaprenyltransferase (292 aa).

9 helical membrane-spanning segments follow: residues 24–44 (IGTLLLLWPTYWALWLANAGM), 47–67 (LTNFIVFTLGVVIMRSAGCVI), 97–117 (AISLFILLITVAFLLVLMLSV), 119–139 (TILLSFGALALAFCYPFMKRY), 145–165 (VVLGAAFGWAIPMAFMASINA), 171–191 (WLLFIANICWTVAYDTMYAMV), 214–234 (HIIGLLNLAFIALMLSIGALN), 238–258 (LSYWLGLSVAIVLLVYQQVLI), and 270–290 (FLNNHYVGLAFFIGLLFSYPV).

The protein belongs to the UbiA prenyltransferase family. Requires Mg(2+) as cofactor.

It localises to the cell inner membrane. It carries out the reaction all-trans-octaprenyl diphosphate + 4-hydroxybenzoate = 4-hydroxy-3-(all-trans-octaprenyl)benzoate + diphosphate. It functions in the pathway cofactor biosynthesis; ubiquinone biosynthesis. Its function is as follows. Catalyzes the prenylation of para-hydroxybenzoate (PHB) with an all-trans polyprenyl group. Mediates the second step in the final reaction sequence of ubiquinone-8 (UQ-8) biosynthesis, which is the condensation of the polyisoprenoid side chain with PHB, generating the first membrane-bound Q intermediate 3-octaprenyl-4-hydroxybenzoate. In Pseudoalteromonas translucida (strain TAC 125), this protein is 4-hydroxybenzoate octaprenyltransferase.